The primary structure comprises 317 residues: Putative 12-oxophytodienoate reductase 10 (317 aa).

Residue 26–28 (PVG) participates in FMN binding. Position 117–120 (117–120 (HGAN)) interacts with substrate. Tyrosine 122 acts as the Proton donor in catalysis. Residue arginine 169 coordinates FMN. Arginine 209 is a substrate binding site. Residues glycine 244 and 265 to 266 (GR) each bind FMN.

This sequence belongs to the NADH:flavin oxidoreductase/NADH oxidase family. Requires FMN as cofactor.

Its function is as follows. Putative oxophytodienoate reductase that may be involved in the biosynthesis or metabolism of oxylipin signaling molecules. The protein is Putative 12-oxophytodienoate reductase 10 (OPR10) of Oryza sativa subsp. japonica (Rice).